A 166-amino-acid chain; its full sequence is Small heat shock protein OV25-2 (166 aa).

Residues 38–149 enclose the sHSP domain; that stretch reads LNECNIGNSL…ASRNIPIRAS (112 aa). Positions 140–166 are disordered; it reads ASRNIPIRASPKEPEANQKSAINDAKQ.

It belongs to the small heat shock protein (HSP20) family.

In Onchocerca volvulus, this protein is Small heat shock protein OV25-2 (OV25-2).